We begin with the raw amino-acid sequence, 2228 residues long: Genome polyprotein (2228 aa).

Positions 56-76 are disordered; that stretch reads AEVGAHQSEPLKTSVDKPGSK. 2 short sequence motifs ((L)YPX(n)L motif) span residues 167-171 and 200-205; these read YPHGL and YPVWEL. The tract at residues 766–836 is involved in P1-2A pentamerization; the sequence is MLDRIALGDL…PRKIKGVFSQ (71 aa). Residues 1011 to 1031 form a helical membrane-spanning segment; it reads TVEIINTVLCFVKSGILLYVI. A membrane-penetrating ability region spans residues 1043–1070; sequence IGLLRVMNYADIGCSVISCGKVFSKMLE. Residues 1127-1152 adopt a coiled-coil conformation; it reads NKKDVLNILKDNQQKIERAIEEADNF. An SF3 helicase domain is found at 1204–1366; the sequence is HQKLKNLGSI…SFFKNPHNDM (163 aa). Residue 1230 to 1237 participates in ATP binding; that stretch reads GKRGGGKS. A helical membrane pass occupies residues 1462–1482; that stretch reads WVAVGAAVGVLGVLVGGWYVY. Tyr-1499 bears the O-(5'-phospho-RNA)-tyrosine mark. The Peptidase C3 domain occupies 1514–1728; sequence DPVESQSTLE…VAKLVTQEMF (215 aa). Residues His-1563, Asp-1603, and Cys-1691 each act as for protease 3C activity in the active site. The RdRp catalytic domain occupies 1977–2098; the sequence is DVGLDLDFSA…VFSRQVQFDN (122 aa).

Belongs to the picornaviridae polyprotein family. Homodimer. Homomultimer; probably interacts with membranes in a multimeric form. Seems to assemble into amyloid-like fibers. In terms of assembly, homodimer. Monomer. Interacts with protein 3CD. As to quaternary structure, interacts with host ACBD3. Interacts with protein 3AB. In terms of assembly, interacts with human MAVS. As to quaternary structure, homodimer; disulfide-linked. Homopentamer. Homooligomer. In terms of assembly, interacts with capsid protein VP2. Interacts with capsid protein VP3. As to quaternary structure, interacts with capsid protein VP1. Interacts with capsid protein VP3. Interacts with capsid protein VP1. Interacts with capsid protein VP2. In terms of processing, specific enzymatic cleavages by viral protease in vivo yield a variety of precursors and mature proteins. Polyprotein processing intermediates are produced, such as P1-2A which is a functional precursor of the structural proteins, VP0 which is a VP4-VP2 precursor, VP1-2A precursor, 3ABC precursor which is a stable and catalytically active precursor of 3A, 3B and 3C proteins, 3AB and 3CD precursors. The assembly signal 2A is removed from VP1-2A by a host protease, possibly host Cathepsin L. This cleavage occurs over a region of 3 amino-acids probably generating VP1 proteins with heterogeneous C-termini. Post-translationally, during virion maturation, immature virions are rendered infectious following cleavage of VP0 into VP4 and VP2. This maturation seems to be an autocatalytic event triggered by the presence of RNA in the capsid and is followed by a conformational change of the particle. The assembly signal 2A is removed from VP1-2A by a host protease, possibly host Cathepsin L in naked virions. This cleavage does not occur in enveloped virions. This cleavage occurs over a region of 3 amino-acids probably generating VP1 proteins with heterogeneous C-termini. In terms of processing, VPg is uridylylated prior to priming replication into VPg-pUpU. Post-translationally, unlike other picornaviruses, does not seem to be myristoylated.

The protein localises to the virion. It localises to the host endosome. The protein resides in the host multivesicular body. It is found in the host membrane. Its subcellular location is the host mitochondrion outer membrane. The protein localises to the host cytoplasm. It localises to the host cytoplasmic vesicle membrane. It carries out the reaction RNA(n) + a ribonucleoside 5'-triphosphate = RNA(n+1) + diphosphate. It catalyses the reaction a ribonucleoside 5'-triphosphate + H2O = a ribonucleoside 5'-diphosphate + phosphate + H(+). The enzyme catalyses Selective cleavage of Gln-|-Gly bond in the poliovirus polyprotein. In other picornavirus reactions Glu may be substituted for Gln, and Ser or Thr for Gly.. Capsid proteins VP1, VP2, and VP3 form a closed capsid enclosing the viral positive strand RNA genome. All these proteins contain a beta-sheet structure called beta-barrel jelly roll. Together they form an icosahedral capsid (T=3) composed of 60 copies of each VP1, VP2, and VP3, with a diameter of approximately 300 Angstroms. VP1 is situated at the 12 fivefold axes, whereas VP2 and VP3 are located at the quasi-sixfold axes. The naked capsid interacts with the host receptor HAVCR1 to provide virion attachment to and probably entry into the target cell. Functionally, VP0 precursor is a component of the immature procapsids. In terms of biological role, plays a role in the assembly of the 12 pentamers into an icosahedral structure. Has not been detected in mature virions, supposedly owing to its small size. Its function is as follows. Precursor component of immature procapsids that corresponds to an extended form of the structural protein VP1. After maturation, possibly by the host Cathepsin L, the assembly signal 2A is cleaved to give rise to the mature VP1 protein. Functions as a viroporin. Affects membrane integrity and causes an increase in membrane permeability. Involved in host intracellular membrane rearrangements probably to give rise to the viral factories. Does not disrupt calcium homeostasis or glycoprotein trafficking. Antagonizes the innate immune response of the host by suppressing IFN-beta synthesis, which it achieves by interfering with the RIG-I/IFIH1 pathway. Functionally, affects membrane integrity and causes an increase in membrane permeability. In terms of biological role, associates with and induces structural rearrangements of intracellular membranes. Displays RNA-binding activity. Its function is as follows. The precursor 3ABC is targeted to the mitochondrial membrane where protease 3C activity cleaves and inhibits the host antiviral protein MAVS, thereby disrupting activation of IRF3 through the IFIH1/MDA5 pathway. In vivo, the protease activity of 3ABC precursor is more efficient in cleaving the 2BC precursor than that of protein 3C. The 3ABC precursor may therefore play a role in the proteolytic processing of the polyprotein. Possible viroporin. Interacts with the 3CD precursor and with RNA structures found at both the 5'- and 3'-termini of the viral genome. Since the 3AB precursor contains the hydrophobic domain 3A, it probably anchors the whole viral replicase complex to intracellular membranes on which viral RNA synthesis occurs. Functionally, may serve as membrane anchor to the 3AB and 3ABC precursors via its hydrophobic domain. May interact with RNA. In terms of biological role, acts as a primer for viral RNA replication and remains covalently bound to viral genomic RNA. VPg is uridylylated prior to priming replication into VPg-pUpU. The VPg-pUpU is then used as primer on the genomic RNA poly(A) by the RNA-dependent RNA polymerase to replicate the viral genome. Its function is as follows. Cysteine protease that generates mature viral proteins from the precursor polyprotein. In addition to its proteolytic activity, it binds to viral RNA, and thus influences viral genome replication. RNA and substrate bind cooperatively to the protease. Cleaves IKBKG/NEMO to impair innate immune signaling. Cleaves host PABPC1 which may participate in the switch of viral translation to RNA synthesis. Interacts with the 3AB precursor and with RNA structures found at both the 5'- and 3'-termini of the viral genome. Disrupts TLR3 signaling by degrading the host adapter protein TICAM1/TRIF. Functionally, RNA-directed RNA polymerase 3D-POL replicates genomic and antigenomic RNA by recognizing replications specific signals. The polypeptide is Genome polyprotein (Cercopithecus hamlyni (Owl-faced monkey)).